We begin with the raw amino-acid sequence, 338 residues long: Alcohol dehydrogenase (338 aa).

Zn(2+) contacts are provided by C38, H61, E62, C92, C95, C98, C106, and C148.

Belongs to the zinc-containing alcohol dehydrogenase family. Homotetramer. Requires Zn(2+) as cofactor.

It carries out the reaction a primary alcohol + NAD(+) = an aldehyde + NADH + H(+). It catalyses the reaction a secondary alcohol + NAD(+) = a ketone + NADH + H(+). The enzyme catalyses ethanol + NAD(+) = acetaldehyde + NADH + H(+). The catalysed reaction is 1-propanol + NAD(+) = propanal + NADH + H(+). It carries out the reaction butan-1-ol + NAD(+) = butanal + NADH + H(+). It catalyses the reaction propan-2-ol + NAD(+) = acetone + NADH + H(+). Functionally, psychrophilic alcohol dehydrogenase that exhibits a wide range of substrate specificity, oxidizing mainly primary and secondary aliphatic alcohols, utilizing NAD(+) as a cosubstrate. In vitro, shows highest reaction rates for ethanol as a substrate and gradually decreases its reaction rates as the length and branching of the carbon chain of the alcohol substrates increase. To a lesser extent, is also able to reduce aldehydes and ketones. Do not catalyze the further oxidation of aldehydes to carboxylic acids. Cannot use NADP(+) instead of NAD(+). In Moraxella sp. (strain TAE123), this protein is Alcohol dehydrogenase.